Consider the following 156-residue polypeptide: Large ribosomal subunit protein uL22c (156 aa).

Belongs to the universal ribosomal protein uL22 family. As to quaternary structure, part of the 50S ribosomal subunit.

The protein resides in the plastid. It is found in the chloroplast. Functionally, this protein binds specifically to 23S rRNA. The globular domain of the protein is located near the polypeptide exit tunnel on the outside of the subunit, while an extended beta-hairpin is found that lines the wall of the exit tunnel in the center of the 70S ribosome. This is Large ribosomal subunit protein uL22c (rpl22) from Buxus microphylla (Littleleaf boxwood).